Consider the following 144-residue polypeptide: 3-dehydroquinate dehydratase (144 aa).

Tyr22 acts as the Proton acceptor in catalysis. Asn73, His79, and Asp86 together coordinate substrate. Catalysis depends on His99, which acts as the Proton donor. Residues 100-101 and Arg110 each bind substrate; that span reads LS.

The protein belongs to the type-II 3-dehydroquinase family. As to quaternary structure, homododecamer.

It carries out the reaction 3-dehydroquinate = 3-dehydroshikimate + H2O. Its pathway is metabolic intermediate biosynthesis; chorismate biosynthesis; chorismate from D-erythrose 4-phosphate and phosphoenolpyruvate: step 3/7. In terms of biological role, catalyzes a trans-dehydration via an enolate intermediate. In Trichlorobacter lovleyi (strain ATCC BAA-1151 / DSM 17278 / SZ) (Geobacter lovleyi), this protein is 3-dehydroquinate dehydratase.